The sequence spans 282 residues: Nicotianamine synthase-like 5 protein (282 aa).

This sequence belongs to the nicotianamine synthase (NAS)-like family.

This Hordeum vulgare (Barley) protein is Nicotianamine synthase-like 5 protein (NAS5).